Here is a 2104-residue protein sequence, read N- to C-terminus: Protein Ycf2 (2104 aa).

Residue Gly-1396–Ser-1403 participates in ATP binding.

It belongs to the Ycf2 family.

Its subcellular location is the plastid. It localises to the chloroplast stroma. In terms of biological role, probable ATPase of unknown function. Its presence in a non-photosynthetic plant (Epifagus virginiana) and experiments in tobacco indicate that it has an essential function which is probably not related to photosynthesis. The polypeptide is Protein Ycf2 (ycf2-A) (Adiantum capillus-veneris (Maidenhair fern)).